The primary structure comprises 305 residues: Major fimbrium anchoring subunit FimB (305 aa).

A signal peptide spans Met1–Gly22. Cys23 is lipidated: N-palmitoyl cysteine. Cys23 carries the S-diacylglycerol cysteine lipid modification.

It belongs to the bacteroidetes fimbrillin superfamily. FimB/Mfa2 family. In terms of assembly, fimB is not part of the fimbrium itself, but anchors the fimbrium in the outer membrane. Linear, head-to-tail oligomerization of fimbrial subunits mediates assembly of the fimbrium stalk, while the minor components FimC, FimD and FimE probably form the fimbrium tip. The anchoring subunit FimB limits fimbrium length and is important for solid fimbrium attachment to the outer membrane. In its absence, the major fimbriae become very long and are easily detached from the membrane.

The protein localises to the cell outer membrane. In terms of biological role, anchoring subunit of the major fimbriae. Regulates fimbrial length. These filamentous pili are attached to the cell surface; they mediate biofilm formation, adhesion onto host cells and onto other bacteria that are part of the oral microbiome. Fimbriae of P.gingivalis are major virulence factors. The polypeptide is Major fimbrium anchoring subunit FimB (Porphyromonas gingivalis (Bacteroides gingivalis)).